Reading from the N-terminus, the 147-residue chain is Angiogenin (147 aa).

An N-terminal signal peptide occupies residues 1-24 (MVILLGPLLLVFMLGLGLAPLSLA). H37 serves as the catalytic Proton acceptor. The tRNA site is built by R45 and D46. 3 disulfide bridges follow: C50/C104, C63/C115, and C81/C130. The Nucleolar localization signal motif lies at 55 to 59 (KQRGL). Residues C104 and I126 each coordinate tRNA. H137 acts as the Proton donor in catalysis.

The protein belongs to the pancreatic ribonuclease family. As to quaternary structure, homodimer. Interacts with RNH1; inhibiting ANG ribonuclease activity. Interacts with PCNA.

It localises to the secreted. The protein resides in the nucleus. The protein localises to the nucleolus. Its subcellular location is the cytoplasm. It is found in the stress granule. Its activity is regulated as follows. Has weak tRNA ribonuclease activity by itself due to partial autoinhibition by its C-terminus, which folds into a short alpha-helix that partially occludes the substrate-binding site. In absence of stress, the ribonuclease activity is inhibited by RNH1 in the cytoplasm. In response to stress, dissociates from RNH1 in the cytoplasm and associates with cytoplasmic ribosomes with vacant A-sites: ribosomes directly activate the tRNA ribonuclease activity of ANG by refolding the C-terminal alpha-helix. In response to stress, the angiogenic activity of ANG is inhibited by RNH1 in the nucleus. Secreted ribonuclease that can either promote or restrict cell proliferation of target cells, depending on the context. Endocytosed in target cells via its receptor PLXNB2 and translocates to the cytoplasm or nucleus. Under stress conditions, localizes to the cytoplasm and promotes the assembly of stress granules (SGs): specifically cleaves a subset of tRNAs within anticodon loops to produce tRNA-derived stress-induced fragments (tiRNAs), resulting in translation repression and inhibition of cell proliferation. tiRNas also prevent formation of apoptosome, thereby promoting cell survival. Preferentially cleaves RNAs between a pyrimidine and an adenosine residue, suggesting that it cleaves the anticodon loop of tRNA(Ala) (32-UUAGCAU-38) after positions 33 and 36. Cleaves a subset of tRNAs, including tRNA(Ala), tRNA(Glu), tRNA(Gly), tRNA(Lys), tRNA(Val), tRNA(His), tRNA(Asp) and tRNA(Sec). Under growth conditions and in differentiated cells, translocates to the nucleus and stimulates ribosomal RNA (rRNA) transcription, including that containing the initiation site sequences of 45S rRNA, thereby promoting cell growth and proliferation. Angiogenin induces vascularization of normal and malignant tissues via its ability to promote rRNA transcription. Involved in hematopoietic stem and progenitor cell (HSPC) growth and survival by promoting rRNA transcription in growth conditions and inhibiting translation in response to stress, respectively. Mediates the crosstalk between myeloid and intestinal epithelial cells to protect the intestinal epithelial barrier integrity: secreted by myeloid cells and promotes intestinal epithelial cells proliferation and survival. Also mediates osteoclast-endothelial cell crosstalk in growing bone: produced by osteoclasts and protects the neighboring vascular cells against senescence by promoting rRNA transcription. The sequence is that of Angiogenin (ANG) from Sus scrofa (Pig).